The sequence spans 297 residues: tRNA pseudouridine synthase A (297 aa).

Asp-72 serves as the catalytic Nucleophile. Tyr-144 is a substrate binding site.

This sequence belongs to the tRNA pseudouridine synthase TruA family. Homodimer.

It catalyses the reaction uridine(38/39/40) in tRNA = pseudouridine(38/39/40) in tRNA. Formation of pseudouridine at positions 38, 39 and 40 in the anticodon stem and loop of transfer RNAs. The chain is tRNA pseudouridine synthase A from Mycobacterium bovis (strain ATCC BAA-935 / AF2122/97).